The sequence spans 2186 residues: Non-reducing polyketide synthase men2 (2186 aa).

One can recognise a Starter acyltransferase (SAT) domain in the interval 16–255; sequence FFGDQTVDAL…MQLPLGTPAH (240 aa). Positions 382–815 constitute a Ketosynthase family 3 (KS3) domain; that stretch reads SNLIAVVGQS…GGNNCVLLEE (434 aa). Catalysis depends on for beta-ketoacyl synthase activity residues Cys554, His690, and His729. A Malonyl-CoA:ACP transacylase (MAT) domain is found at 914–1204; sequence VFAFTGQGAQ…SSLVKSTLSA (291 aa). A product template (PT) domain region spans residues 1299–1623; the sequence is TASLQQVRSE…TRRVLATVLG (325 aa). Positions 1303-1434 are N-terminal hotdog fold; it reads QQVRSEQING…CKLHFDKRGS (132 aa). Residues 1303-1619 form the PKS/mFAS DH domain; sequence QQVRSEQING…FQRLTRRVLA (317 aa). His1335 functions as the Proton acceptor; for dehydratase activity in the catalytic mechanism. A C-terminal hotdog fold region spans residues 1463–1619; sequence TGHRLPKSVV…FQRLTRRVLA (157 aa). Residue Asp1523 is the Proton donor; for dehydratase activity of the active site. Residues 1666 to 1742 enclose the Carrier 1 domain; sequence VGDEKADAAI…GLRRAISELS (77 aa). Residue Ser1702 is modified to O-(pantetheine 4'-phosphoryl)serine. The segment at 1747-1785 is disordered; sequence GPASGSVSVSSSATTTHGMTTPSSTSSAQSSQSSQTPDG. Low complexity predominate over residues 1749–1783; the sequence is ASGSVSVSSSATTTHGMTTPSSTSSAQSSQSSQTP. Residues 1784-1861 enclose the Carrier 2 domain; sequence DGPGIYANAV…HVRRALGSDS (78 aa). An O-(pantetheine 4'-phosphoryl)serine modification is found at Ser1821. Residues 1857–1878 are disordered; that stretch reads LGSDSDGDSKPKSAPAPPAPEP. The thioesterase (TE) domain stretch occupies residues 1921–2163; sequence LFFLPDGTGY…TMPCDHLSLL (243 aa).

It depends on pantetheine 4'-phosphate as a cofactor.

It functions in the pathway secondary metabolite biosynthesis. Non-reducing polyketide synthase; part of the gene cluster that mediates the biosynthesis of menisporopsin A, a bioactive macrocyclic polylactone. The biosynthesis of menisporopsin A is performed by a reducing (man1) and a non-reducing (men2) polyketide synthase that catalyze the formation of each menisporopsin A subunits, while the esterification and cyclolactonization activities are probably peformed by the unusual thioesterase domain of men2. First, a reduced diketide intermediate, 3-hydroxybutyryl-S-ACP is produced by men1 and transferred to men2; this is followed by a second reduced diketide which is further elongated using 3 units of malonyl-coA to form a reduced pentaketide. The cyclization of this intermediate by the PT domain forms the second subunit, 2,4-dihydroxy-6-(2-hydroxy-n-propyl)benzoyl-S-ACP. The TE domain of men2 then esterifies the secondary hydroxyl group on the side chain of the second subunit with the acyl-TE of the first subunit to form the first ester intermediate. This process occurs iteratively to form a linear tetraester intermediate. The final subunit is formed by a similar process, except that an extra malonyl-CoA is required in an additional elongation step to form a reduced hexaketide intermediate, and the carbonyl group next to the secondary hydroxyl group is reduced by a trans-acting ketoreductase. Again, the PT domain catalyzes cyclization to form the largest subunit, 2,4-dihydroxy-6-(2,4-dihydroxy-n-pentyl) benzoyl-S-ACP. Then the linear pentaester intermediate is formed. In this step, if the intermediate transfer rate is slow, intra- molecular cyclization involving the secondary hydroxyl group of the pentaester intermediate may occur to form menisporopsin B. Alternatively, transfer of the pentaester intermediate to the TE domain would allow cyclolactonization to be catalyzed by the TE to form menisporopsin A. This Menisporopsis theobromae protein is Non-reducing polyketide synthase men2.